Consider the following 331-residue polypeptide: MSNDTLHKYEALPEDHRNVALRPCLIEEFVGQTEVIKNLKVFIQSAYERREPMDHVLLYGPPGLGKTTLAHIIAKELKVNFRSTAGPLLSKAGDLAAILTNLQPMDVLFIDEIHRLNRNIEEVLYSAMEDYCLDIVVGEGCGARTLKIDIPAFTLIGATTRFGLISNPLRDRFGIPLHLEFYSVDELVLVIKRAAGVICTSIDDSGAREIASRSRGTPRIALRLFRRVRDFLEFERKHGTIDGNFANSALFRLGIDGAGFDKMDLKYLKFVFEAKGPVGIDTIASALSEDVGNIEETIEPYLIKTCFIQRTPRGRVLTQKGFEYLLSSKYI.

The interval 1 to 182 (MSNDTLHKYE…FGIPLHLEFY (182 aa)) is large ATPase domain (RuvB-L). ATP-binding positions include L21, R22, G63, K66, T67, T68, 129–131 (EDY), R172, Y182, and R219. T67 contributes to the Mg(2+) binding site. The interval 183-254 (SVDELVLVIK…FANSALFRLG (72 aa)) is small ATPAse domain (RuvB-S). Residues 257 to 331 (GAGFDKMDLK…FEYLLSSKYI (75 aa)) are head domain (RuvB-H). DNA-binding residues include R310 and R315.

The protein belongs to the RuvB family. In terms of assembly, homohexamer. Forms an RuvA(8)-RuvB(12)-Holliday junction (HJ) complex. HJ DNA is sandwiched between 2 RuvA tetramers; dsDNA enters through RuvA and exits via RuvB. An RuvB hexamer assembles on each DNA strand where it exits the tetramer. Each RuvB hexamer is contacted by two RuvA subunits (via domain III) on 2 adjacent RuvB subunits; this complex drives branch migration. In the full resolvosome a probable DNA-RuvA(4)-RuvB(12)-RuvC(2) complex forms which resolves the HJ.

It localises to the cytoplasm. It catalyses the reaction ATP + H2O = ADP + phosphate + H(+). Its function is as follows. The RuvA-RuvB-RuvC complex processes Holliday junction (HJ) DNA during genetic recombination and DNA repair, while the RuvA-RuvB complex plays an important role in the rescue of blocked DNA replication forks via replication fork reversal (RFR). RuvA specifically binds to HJ cruciform DNA, conferring on it an open structure. The RuvB hexamer acts as an ATP-dependent pump, pulling dsDNA into and through the RuvAB complex. RuvB forms 2 homohexamers on either side of HJ DNA bound by 1 or 2 RuvA tetramers; 4 subunits per hexamer contact DNA at a time. Coordinated motions by a converter formed by DNA-disengaged RuvB subunits stimulates ATP hydrolysis and nucleotide exchange. Immobilization of the converter enables RuvB to convert the ATP-contained energy into a lever motion, pulling 2 nucleotides of DNA out of the RuvA tetramer per ATP hydrolyzed, thus driving DNA branch migration. The RuvB motors rotate together with the DNA substrate, which together with the progressing nucleotide cycle form the mechanistic basis for DNA recombination by continuous HJ branch migration. Branch migration allows RuvC to scan DNA until it finds its consensus sequence, where it cleaves and resolves cruciform DNA. The sequence is that of Holliday junction branch migration complex subunit RuvB from Anaplasma marginale (strain Florida).